Reading from the N-terminus, the 137-residue chain is Peptide methionine sulfoxide reductase MsrB (137 aa).

The MsrB domain maps to 7–129 (AEELKKKLSE…NSASLAFSDE (123 aa)). The Zn(2+) site is built by C46, C49, C95, and C98. Catalysis depends on C118, which acts as the Nucleophile.

The protein belongs to the MsrB Met sulfoxide reductase family. Requires Zn(2+) as cofactor.

It catalyses the reaction L-methionyl-[protein] + [thioredoxin]-disulfide + H2O = L-methionyl-(R)-S-oxide-[protein] + [thioredoxin]-dithiol. The protein is Peptide methionine sulfoxide reductase MsrB of Salmonella arizonae (strain ATCC BAA-731 / CDC346-86 / RSK2980).